The sequence spans 477 residues: Chromosomal replication initiator protein DnaA (477 aa).

Residues 1–87 (MSDRSDPTHA…AGVSNFAIVV (87 aa)) form a domain I, interacts with DnaA modulators region. The segment at 87-132 (VNPEIAQDAFAQHPEPAAEQPYIETPTITAPTDNPGLPASPSRGDS) is domain II. Positions 112–131 (PTITAPTDNPGLPASPSRGD) are disordered. The segment at 133-349 (RLNPKYGFDT…GTLIRVTAFA (217 aa)) is domain III, AAA+ region. ATP is bound by residues G177, G179, K180, and T181. The interval 350 to 477 (SLNKTPVDLA…IKQNHRYGKM (128 aa)) is domain IV, binds dsDNA.

It belongs to the DnaA family. In terms of assembly, oligomerizes as a right-handed, spiral filament on DNA at oriC.

The protein localises to the cytoplasm. Its function is as follows. Plays an essential role in the initiation and regulation of chromosomal replication. ATP-DnaA binds to the origin of replication (oriC) to initiate formation of the DNA replication initiation complex once per cell cycle. Binds the DnaA box (a 9 base pair repeat at the origin) and separates the double-stranded (ds)DNA. Forms a right-handed helical filament on oriC DNA; dsDNA binds to the exterior of the filament while single-stranded (ss)DNA is stabiized in the filament's interior. The ATP-DnaA-oriC complex binds and stabilizes one strand of the AT-rich DNA unwinding element (DUE), permitting loading of DNA polymerase. After initiation quickly degrades to an ADP-DnaA complex that is not apt for DNA replication. Binds acidic phospholipids. The polypeptide is Chromosomal replication initiator protein DnaA (Clavibacter michiganensis subsp. michiganensis (strain NCPPB 382)).